A 106-amino-acid chain; its full sequence is Defensin-like protein 1 (106 aa).

The signal sequence occupies residues 1–25 (MARSLCFMAFAVLAMMLFVAYEVQA). 4 disulfide bridges follow: Cys29/Cys73, Cys40/Cys60, Cys46/Cys67, and Cys50/Cys69.

This sequence belongs to the DEFL family.

Its subcellular location is the secreted. The protein localises to the vacuole. The protein is Defensin-like protein 1 (THIO1) of Nicotiana paniculata.